Reading from the N-terminus, the 341-residue chain is MIEPVVGYRMLQAIGWPWPGPPADSAWQAMCAMYSQCRPARVIEQHRSGYVVAEAPEVPIKVESLPAWQRRSFPPHERAVVGDWVLLDGRRIVALLPRRTVIKRLAAGEHYRQQLIAANLDTAFIVCGLDGDFNPRRIERYCVLIASGGVEPVVVLTKVDLCVDVAAAVAVLREHSSQALAVVAVDARKAEPVVALYPWLLPGRTVALLGSSGAGKSTLTNTLLGEQRMKVGEVRQRDSRGRHTTTHRALLPLPSGACLIDTPGMRELKFTGEEDLVEEFADIELLATQCRFRDCAHQAEPGCAVRAAIGCGTLDPQRLHHYFKLRGEIVGAADRSMLRRY.

Residues 112–268 (RQQLIAANLD…LIDTPGMREL (157 aa)) form the CP-type G domain. Residues 157 to 160 (TKVD) and 210 to 218 (GSSGAGKST) each bind GTP. The Zn(2+) site is built by Cys-290, Cys-295, His-297, and Cys-303.

The protein belongs to the TRAFAC class YlqF/YawG GTPase family. RsgA subfamily. In terms of assembly, monomer. Associates with 30S ribosomal subunit, binds 16S rRNA. The cofactor is Zn(2+).

The protein resides in the cytoplasm. Functionally, one of several proteins that assist in the late maturation steps of the functional core of the 30S ribosomal subunit. Helps release RbfA from mature subunits. May play a role in the assembly of ribosomal proteins into the subunit. Circularly permuted GTPase that catalyzes slow GTP hydrolysis, GTPase activity is stimulated by the 30S ribosomal subunit. The protein is Small ribosomal subunit biogenesis GTPase RsgA of Xylella fastidiosa (strain Temecula1 / ATCC 700964).